The chain runs to 4662 residues: Protein PF3D7_1417600 (4662 aa).

2 helical membrane-spanning segments follow: residues 136–156 (INYV…YLYI) and 161–181 (YIYY…FHII). The LRR 1 repeat unit spans residues 466-489 (IKNIDSINKNHKRLIKISNYNITN). The tract at residues 583 to 710 (YRNDGDVNNK…KMKPDNTLNE (128 aa)) is disordered. The segment covering 590 to 644 (NNKNGYNNNEHSNSSNERSNNNGDNNNNNHNNNNHNNNHHNNGSNNHNGNNNSNN) has biased composition (low complexity). A compositionally biased stretch (basic and acidic residues) spans 650–666 (DDDKKGNDKKNEDKDDE). Positions 690-701 (KKRKEKSKNKNK) are enriched in basic residues. The 74-residue stretch at 783-856 (YKPTEPVNIF…ISNDIKMFWF (74 aa)) folds into the HSA domain. The tract at residues 942-967 (GLMNKMSHQNGKNNNHNDYNNKCEDN) is disordered. One copy of the LRR 2 repeat lies at 1150-1172 (NVHINHIQYDDNNLYYNDDLYNY). The segment covering 1505-1524 (NNNNNSNNNNSNSNNNSNSN) has biased composition (low complexity). Disordered stretches follow at residues 1505-1540 (NNNN…NNSS) and 1705-1761 (KINS…NEKD). Positions 1710–1761 (NNDKSDDKNDDKNDKKNDGKNDKNDEKDDNKTGEKGDNKIGEKDDNKINEKD) are enriched in basic and acidic residues. LRR repeat units follow at residues 2063-2086 (ITKV…MFNK) and 2129-2153 (DEEI…NVKD). Residues 2228-2261 (KNKSNKKKRAKKNIKLGEEENESECNNEGECNNE) are disordered. Over residues 2230–2241 (KSNKKKRAKKNI) the composition is skewed to basic residues. Positions 2246-2261 (EENESECNNEGECNNE) are enriched in acidic residues. 4 LRR repeats span residues 2672–2695 (LDKL…KTID), 2773–2796 (NTVL…TVDI), 2864–2888 (INDD…VNNN), and 2904–2929 (ANNI…YNNS). The tract at residues 2956–2975 (MNNTKQRSHSSYHTSFPMQN) is disordered. 6 LRR repeats span residues 3377–3400 (QNNM…NITM), 3438–3461 (NNSM…YNNS), 3756–3781 (SQRL…NINN), 3935–3960 (QPNI…NINN), 3965–3985 (QPNI…SMNQ), and 3986–4010 (PNIN…NINN). Residues 4203–4272 (DMNQQERLQQ…ERLQQKWEQQ (70 aa)) adopt a coiled-coil conformation. 2 LRR repeats span residues 4296 to 4321 (YQEL…IFLK) and 4333 to 4357 (QKMH…SLQQ). Residues 4384–4412 (QMNHQQINKHQMNQQQMNKQQMNQQQINQ) form a disordered region.

The protein localises to the membrane. The polypeptide is Protein PF3D7_1417600 (Plasmodium falciparum (isolate 3D7)).